The following is a 198-amino-acid chain: Ras-related protein RabH (198 aa).

Residue G14 to S21 coordinates GTP. The short motif at T36–F44 is the Effector region element. GTP is bound by residues D62–M66 and S120–D123. The residue at position 195 (C195) is a Cysteine methyl ester. Residue C195 is the site of S-geranylgeranyl cysteine attachment. Residues S196–N198 constitute a propeptide, removed in mature form.

This sequence belongs to the small GTPase superfamily. Rab family.

It is found in the cell membrane. This chain is Ras-related protein RabH (rabH), found in Dictyostelium discoideum (Social amoeba).